Reading from the N-terminus, the 397-residue chain is Argininosuccinate synthase (397 aa).

8–16 provides a ligand contact to ATP; it reads AYSGGLDTS. Residues Y86 and S91 each contribute to the L-citrulline site. ATP is bound at residue G116. The L-aspartate site is built by T118, N122, and D123. N122 contacts L-citrulline. L-citrulline-binding residues include R126, S175, S184, E260, and Y272.

This sequence belongs to the argininosuccinate synthase family. Type 1 subfamily. In terms of assembly, homotetramer.

The protein resides in the cytoplasm. The enzyme catalyses L-citrulline + L-aspartate + ATP = 2-(N(omega)-L-arginino)succinate + AMP + diphosphate + H(+). It functions in the pathway amino-acid biosynthesis; L-arginine biosynthesis; L-arginine from L-ornithine and carbamoyl phosphate: step 2/3. This Clostridium botulinum (strain 657 / Type Ba4) protein is Argininosuccinate synthase.